The sequence spans 1209 residues: Protein phosphatase 1 regulatory subunit 26 (1209 aa).

Disordered regions lie at residues 57-91 (DGAARGTSDERAAQRGHRAEGCHDARPAAKPTVHK), 145-279 (SGAA…HRQG), 291-471 (KPPR…VERS), 501-532 (GSDGSLSASPLFYSPNVPSRSDGDSSSVDSDD), 555-694 (GESC…EDLD), 733-836 (EQLG…SNDS), 848-1033 (KAKE…FAHQ), 1052-1072 (RGGVGSERDKGSEGPARGLPS), and 1118-1209 (AFRE…VVKV). Residues 63-91 (TSDERAAQRGHRAEGCHDARPAAKPTVHK) are compositionally biased toward basic and acidic residues. Residues 201–219 (QVGSSKDQGSASPVSVSSD) show a composition bias toward low complexity. Residues 226 to 255 (IRAEIEQFLNEKRQHETQKCDGSVEKKPDT) show a composition bias toward basic and acidic residues. Polar residues predominate over residues 301 to 321 (QPRSLRSKVTTTQENEGSTKP). Over residues 352-362 (SAAQASEASDS) the composition is skewed to low complexity. The span at 442–454 (DTDHAPKLLKETK) shows a compositional bias: basic and acidic residues. 3 stretches are compositionally biased toward basic and acidic residues: residues 609–637 (KMQEVVKDGSQDADHSQGRAEPGHERRDL), 667–685 (KTDEARRLDEKESSEDKSS), and 757–766 (SKRDSGEGPG). Composition is skewed to low complexity over residues 821-836 (PGSLSDDSSSVDSNDS) and 852-861 (SVSSSEVQAE). Ser-1161 is modified (phosphoserine). Positions 1187-1209 (GSDASDFSDTSTEDSGGSSVVKV) are enriched in low complexity.

Interacts with UTP20 and PPP1CA. As to expression, ubiquitous in normal tissues. Expressed in numerous adenocarcinoma cell lines.

The protein resides in the nucleus. The protein localises to the nucleolus. Functionally, inhibits phosphatase activity of protein phosphatase 1 (PP1) complexes. May positively regulate cell proliferation. This Homo sapiens (Human) protein is Protein phosphatase 1 regulatory subunit 26 (PPP1R26).